A 315-amino-acid chain; its full sequence is Olfactory receptor 5AN6 (315 aa).

The Extracellular portion of the chain corresponds to 1-29; it reads MPGGRNSTVITKFILVGFSDFPKLKLVLF. Residues 30–50 traverse the membrane as a helical segment; that stretch reads VIFLGSYLSTVVWNLGLIILI. The Cytoplasmic portion of the chain corresponds to 51 to 54; the sequence is RIDP. The helical transmembrane segment at 55–75 threads the bilayer; the sequence is YLHTPMYFFLSNLSFLDFCYI. The Extracellular segment spans residues 76–99; sequence SSTTPKMLSGFFQKSKSISFVGCT. A disulfide bond links cysteine 98 and cysteine 180. Residues 100-120 form a helical membrane-spanning segment; that stretch reads MQYFIFSSLGLSECCLLAAMA. Topologically, residues 121 to 123 are cytoplasmic; sequence YDR. The helical transmembrane segment at 124 to 143 threads the bilayer; it reads YAAICNPLLYTAIMSPSLCV. Residue histidine 144 is a topological domain, extracellular. A helical transmembrane segment spans residues 145–165; it reads MVVGAYSTGLLGSLIQLCAIL. Residues 166–202 are Cytoplasmic-facing; it reads QLHFCGPNIINHFFCDLPQLLVLSCSETFPLQVLKFV. The chain crosses the membrane as a helical span at residues 203-223; the sequence is IAVIFGVASVIVILISYGYII. Residues 224–240 are Extracellular-facing; sequence GTILNISSVEGRSKAFN. The helical transmembrane segment at 241–261 threads the bilayer; the sequence is TCASHLTAVTLFFGSGLFVYM. Residues 262-272 lie on the Cytoplasmic side of the membrane; it reads RPSSNSSQGYD. The helical transmembrane segment at 273–293 threads the bilayer; sequence KMASVFYTVVIPMLNPLIYSL. Residues 294-315 are Extracellular-facing; the sequence is RNKEIKDALQRCKNKCFSQCHC.

The protein belongs to the G-protein coupled receptor 1 family. As to expression, localized in the dorsomedial and ventral region of the olfactory bulb.

It is found in the cell membrane. Its function is as follows. Odorant receptor specific for muscone. Muscone-binding causes a conformation change that triggers signaling via G(s)-class of G alpha protein GNAL, activating adenylyl cyclase. The polypeptide is Olfactory receptor 5AN6 (Mus musculus (Mouse)).